The following is a 374-amino-acid chain: Phosphatidyl-myo-inositol mannosyltransferase (374 aa).

GDP-alpha-D-mannose contacts are provided by Tyr-9 and Gly-16. A 1,2-diacyl-sn-glycero-3-phospho-(1D-myo-inositol) is bound by residues Gln-18, 62-63 (YN), and Arg-68. GDP-alpha-D-mannose contacts are provided by residues Arg-196, 201 to 202 (RK), 251 to 253 (VDD), Lys-256, 274 to 278 (ESFGI), and Glu-282.

This sequence belongs to the glycosyltransferase group 1 family. Glycosyltransferase 4 subfamily. As to quaternary structure, monomer. Mg(2+) is required as a cofactor.

Its subcellular location is the cell membrane. It carries out the reaction a 1,2-diacyl-sn-glycero-3-phospho-(1D-myo-inositol) + GDP-alpha-D-mannose = a 1,2-diacyl-sn-glycero-3-phospho-[alpha-D-mannopyranosyl-(1&lt;-&gt;6)-D-myo-inositol] + GDP + H(+). The protein operates within phospholipid metabolism; phosphatidylinositol metabolism. Functionally, involved in the biosynthesis of phosphatidyl-myo-inositol mannosides (PIM) which are early precursors in the biosynthesis of lipomannans (LM) and lipoarabinomannans (LAM). Catalyzes the addition of a mannosyl residue from GDP-D-mannose (GDP-Man) to the position 2 of the carrier lipid phosphatidyl-myo-inositol (PI) to generate a phosphatidyl-myo-inositol bearing an alpha-1,2-linked mannose residue (PIM1). The polypeptide is Phosphatidyl-myo-inositol mannosyltransferase (Mycobacterium leprae (strain TN)).